The primary structure comprises 723 residues: Catalase-peroxidase (723 aa).

A cross-link (tryptophyl-tyrosyl-methioninium (Trp-Tyr) (with M-250)) is located at residues 96–224; the sequence is WHAAGTYRIQ…LAAVQMGLIY (129 aa). The active-site Proton acceptor is H97. Positions 224–250 form a cross-link, tryptophyl-tyrosyl-methioninium (Tyr-Met) (with W-96); that stretch reads YVNPEGVNSQPDPIKTGEQVRVTFARM. Position 265 (H265) interacts with heme b.

Belongs to the peroxidase family. Peroxidase/catalase subfamily. As to quaternary structure, homodimer or homotetramer. Requires heme b as cofactor. Formation of the three residue Trp-Tyr-Met cross-link is important for the catalase, but not the peroxidase activity of the enzyme.

The catalysed reaction is H2O2 + AH2 = A + 2 H2O. The enzyme catalyses 2 H2O2 = O2 + 2 H2O. Its function is as follows. Bifunctional enzyme with both catalase and broad-spectrum peroxidase activity. The polypeptide is Catalase-peroxidase (Marinobacter nauticus (strain ATCC 700491 / DSM 11845 / VT8) (Marinobacter aquaeolei)).